A 204-amino-acid chain; its full sequence is Glycerol-3-phosphate acyltransferase (204 aa).

5 consecutive transmembrane segments (helical) span residues 8–28, 53–73, 81–101, 116–136, and 155–175; these read ILIF…CYIF, VLAA…VVIA, FITA…IFFG, FGFS…VAII, and VIFT…IIIL.

This sequence belongs to the PlsY family. As to quaternary structure, probably interacts with PlsX.

It is found in the cell inner membrane. It carries out the reaction an acyl phosphate + sn-glycerol 3-phosphate = a 1-acyl-sn-glycero-3-phosphate + phosphate. It participates in lipid metabolism; phospholipid metabolism. Functionally, catalyzes the transfer of an acyl group from acyl-phosphate (acyl-PO(4)) to glycerol-3-phosphate (G3P) to form lysophosphatidic acid (LPA). This enzyme utilizes acyl-phosphate as fatty acyl donor, but not acyl-CoA or acyl-ACP. This Francisella tularensis subsp. holarctica (strain OSU18) protein is Glycerol-3-phosphate acyltransferase.